A 423-amino-acid polypeptide reads, in one-letter code: MEGGRCAQVSSVPASPSSGHRHRAALILARGGSKGIPLKNIKNLAGVPLIGWVLRAALDSDVDSVWVSTDHDEIERVAKLWGAKVHRRSPEVSKDSSSSLETIQEFIRLRPEVDVICHIQATSPCLHPHHINEALQKITHQGFSYVLSVVRRHQFRWEELQENEDRNPKSFNINVAQRPRRQDWPGELYENGSFYFSTRKAWESGLTELGRIAYYEMPPEFSVDIDVDIDWPVAEQRVLRFGYFGREENAAVRLFLCKVSGCLTNGQIYMSVSGEDLVTINARDVAGIQMLQKENIEVILISSVNEPLSRGVLEKVSQRAGCGLSFTEQRNALEMQKLMDKRKLHWDQVAFMGSESEDVEIMSQAGLNGVPSDAPVAELIAAKYTCQRAGGHGAVREFAEYILSMKRKSSREENHERIDKHNF.

Residues arginine 30, asparagine 40, arginine 88, serine 97, serine 99, and glutamine 120 each contribute to the substrate site. Arginine 178 is a catalytic residue.

It belongs to the CMP-NeuNAc synthase family. In terms of assembly, homotetramer.

Its subcellular location is the cytoplasm. It catalyses the reaction an N-acylneuraminate + CTP = a CMP-N-acyl-beta-neuraminate + diphosphate. It functions in the pathway amino-sugar metabolism; N-acetylneuraminate metabolism. Its function is as follows. Catalyzes the activation of 2-keto-3-deoxy-D-glycero-D-galacto-nononic acid (KDN) to cytidine 5'-monophosphate 2-keto-3-deoxy-D-glycero-D-galacto-nononic acid (CMP-KDN), a substrate required for the addition of sialic acid. Also has weak activity towards N-acetylneuraminic acid (NeuNAc) and N-glycolylneuraminic acid (Neu5Gc). The chain is N-acylneuraminate cytidylyltransferase B from Danio rerio (Zebrafish).